The sequence spans 235 residues: Replication protein (235 aa).

Tyr149 lines the DNA pocket.

Belongs to the Gram-positive plasmids replication protein type 1 family.

Its function is as follows. Produces a single-strand nick in a specific site of the plasmid, and this nick results in single-strand replication by rolling circle mechanism. This Bacillus sp protein is Replication protein (repB).